The sequence spans 544 residues: Methionine--tRNA ligase (544 aa).

Positions 10–20 match the 'HIGH' region motif; sequence PYANGSLHLGH. Zn(2+)-binding residues include Cys-141, Cys-144, Cys-153, and Cys-156. The 'KMSKS' region motif lies at 329–333; that stretch reads KLSTS. Thr-332 contacts ATP.

The protein belongs to the class-I aminoacyl-tRNA synthetase family. MetG type 1 subfamily. As to quaternary structure, monomer. Zn(2+) serves as cofactor.

It localises to the cytoplasm. It catalyses the reaction tRNA(Met) + L-methionine + ATP = L-methionyl-tRNA(Met) + AMP + diphosphate. Is required not only for elongation of protein synthesis but also for the initiation of all mRNA translation through initiator tRNA(fMet) aminoacylation. The polypeptide is Methionine--tRNA ligase (Bacillus cereus (strain Q1)).